Reading from the N-terminus, the 248-residue chain is MELKVDTHTHTYASGHAYSTLIENAKSAKQNGLAMFCTTDHSESMPGAPHYWFFSNQRVLPRFIEDVAIIRGVESNIMNTQGEIDIHPSVDKNLDWVIASFHEPVFRPSDVATHTEALLNVIKGGRVDALGHLGNPNFDFDFEVVIQCAAEHNVAIEINNTTLKGNSRVGSVDRCYEIARIAKAKGAFITTGSDAHFCIDVGGLDLVSSLLGEVGVDSSKVITHSPQQFLAFLVLRGRQSIAEFSVFE.

Residues H8, H10, H16, H41, E74, H102, H132, D194, and H196 each contribute to the Zn(2+) site.

The protein belongs to the PHP family. Requires Zn(2+) as cofactor.

The sequence is that of Probable phosphatase VS_II0429 from Vibrio atlanticus (strain LGP32) (Vibrio splendidus (strain Mel32)).